Here is a 765-residue protein sequence, read N- to C-terminus: ATP-dependent zinc metalloprotease FtsH (765 aa).

Over 1-27 the chain is Cytoplasmic; it reads MSNTSNFNERVTENAKPPKNVKSIIWK. The chain crosses the membrane as a helical span at residues 28 to 48; the sequence is TIGIIIVMAIIIGLILFYVLP. Over 49-213 the chain is Extracellular; sequence RNTIANISNI…NVQLPNQSTA (165 aa). The helical transmembrane segment at 214 to 234 threads the bilayer; the sequence is ILTQFLTSIIPFVILIVIYIV. Residues 235–765 lie on the Cytoplasmic side of the membrane; that stretch reads IARRFSRTMG…EPTASTASSN (531 aa). An ATP-binding site is contributed by 314 to 321; the sequence is GPPGTGKT. His536 contributes to the Zn(2+) binding site. Residue Glu537 is part of the active site. Positions 540 and 615 each coordinate Zn(2+). Residues 730-748 are compositionally biased toward basic and acidic residues; sequence KAAAEKEEQAEKAKLDHQS. Residues 730–765 are disordered; it reads KAAAEKEEQAEKAKLDHQSDSAQPQEEPTASTASSN. Over residues 749–765 the composition is skewed to polar residues; that stretch reads DSAQPQEEPTASTASSN.

The protein in the central section; belongs to the AAA ATPase family. This sequence in the C-terminal section; belongs to the peptidase M41 family. In terms of assembly, homohexamer. Zn(2+) serves as cofactor.

The protein resides in the cell membrane. Acts as a processive, ATP-dependent zinc metallopeptidase for both cytoplasmic and membrane proteins. Plays a role in the quality control of integral membrane proteins. In Mycoplasmoides gallisepticum (strain R(high / passage 156)) (Mycoplasma gallisepticum), this protein is ATP-dependent zinc metalloprotease FtsH.